A 110-amino-acid chain; its full sequence is Toxin HigB-2 (110 aa).

In terms of biological role, toxic component of a type II toxin-antitoxin (TA) system. Inhibits translation by cleavage of mRNA. In Vibrio cholerae serotype O1 (strain ATCC 39315 / El Tor Inaba N16961), this protein is Toxin HigB-2 (higB-2).